A 581-amino-acid chain; its full sequence is Tetratricopeptide repeat and J domain-containing co-chaperone DNJ1 (581 aa).

The first 19 residues, 1-19 (MKATLLPSLLALSLTLCLA), serve as a signal peptide directing secretion. TPR repeat units lie at residues 48-81 (ASQH…DPSS), 82-115 (WLTY…NPKF), 116-149 (DKAY…RAEK), 221-254 (LETR…TPSP), 257-293 (LRRL…DPDN), 378-411 (LELH…DPDN), and 412-445 (VEAT…SGRT). N-linked (GlcNAc...) asparagine glycosylation is present at asparagine 293. The region spanning 467–528 (DYYKVLGVKR…ELRKKYDQGD (62 aa)) is the J domain. The disordered stretch occupies residues 522–544 (KKYDQGDDPNDPMGGQQGGYGNP).

Interacts with the ER chaperone BIP1.

The protein localises to the endoplasmic reticulum lumen. Endoplasmic reticulum (ER) protein that functions as a co-chaperone for BIP1 during ER stress. Might be specifically involved in the refolding of N-glycosylated proteins. The polypeptide is Tetratricopeptide repeat and J domain-containing co-chaperone DNJ1 (Mycosarcoma maydis (Corn smut fungus)).